The primary structure comprises 444 residues: Enolase 1 (444 aa).

Residues His-165 and Glu-174 each contribute to the substrate site. Glu-217 functions as the Proton donor in the catalytic mechanism. Glu-303 and Asp-330 together coordinate substrate. The Proton acceptor role is filled by Lys-355. Substrate-binding positions include 382-385 (SHRS) and Lys-406.

It belongs to the enolase family. Homodimer. It depends on Mg(2+) as a cofactor.

Its subcellular location is the cytoplasm. It carries out the reaction (2R)-2-phosphoglycerate = phosphoenolpyruvate + H2O. The protein operates within carbohydrate degradation; glycolysis; pyruvate from D-glyceraldehyde 3-phosphate: step 4/5. The protein is Enolase 1 (ENO1) of Toxoplasma gondii.